The following is a 721-amino-acid chain: Leucine-rich repeat flightless-interacting protein 2 (721 aa).

The segment at 1–370 (MGTPASGRKR…YMQGLKELKE (370 aa)) is DVL3-binding. Phosphoserine is present on Ser18. The stretch at 22–49 (EALSNIAREAEARLAAKRAARAEARDIR) forms a coiled coil. Phosphoserine occurs at positions 96, 101, 168, 173, 190, and 202. Disordered stretches follow at residues 232-262 (SARSSPGFTNDDTASIVSSDRASRGRRESVV) and 295-338 (KSDK…IDPD). 2 stretches are compositionally biased toward polar residues: residues 237-251 (PGFTNDDTASIVSSD) and 305-338 (TRPSSRNSASATTPLSGNSSRRGSGDTSSLIDPD). Residues Ser309, Ser312, Ser320, Ser324, and Ser328 each carry the phosphoserine modification. Residue Thr331 is modified to Phosphothreonine. 2 positions are modified to phosphoserine: Ser332 and Ser333. Coiled-coil stretches lie at residues 349–524 (DLKD…GEKH) and 566–714 (LDVR…KANR).

The protein belongs to the LRRFIP family. Interacts (via N-terminus) with DVL3. Interacts with FLII. Weakly interacts with MYD88 in resting cells. Following LPS-stimulation, the interaction with MYD88 is rapidly enhanced; the complex gradually dissociates to basal levels after 6 hours of stimulation. Interaction with MYD88 is regulated by LPS-induced phosphorylation at Ser-202. In the presence of LPS, competes with FLII for MYD88-binding. Post-translationally, ser-190 and Ser-202 are phosphorylated in response to LPS stimulation. Ser-202 phosphorylation regulates the LPS-induced interaction with MYD88. As to expression, widely expressed, with highest levels in heart and skeletal muscle.

Its function is as follows. May function as activator of the canonical Wnt signaling pathway, in association with DVL3, upstream of CTNNB1/beta-catenin. Positively regulates Toll-like receptor (TLR) signaling in response to agonist probably by competing with the negative FLII regulator for MYD88-binding. The protein is Leucine-rich repeat flightless-interacting protein 2 (LRRFIP2) of Homo sapiens (Human).